An 82-amino-acid chain; its full sequence is Cytochrome b559 subunit alpha (82 aa).

The chain crosses the membrane as a helical span at residues 21-35 (VIHSVTIPSLFIAGW). His23 lines the heme pocket.

The protein belongs to the PsbE/PsbF family. Heterodimer of an alpha subunit and a beta subunit. PSII is composed of 1 copy each of membrane proteins PsbA, PsbB, PsbC, PsbD, PsbE, PsbF, PsbH, PsbI, PsbJ, PsbK, PsbL, PsbM, PsbT, PsbX, PsbY, PsbZ, Psb30/Ycf12, at least 3 peripheral proteins of the oxygen-evolving complex and a large number of cofactors. It forms dimeric complexes. Requires heme b as cofactor.

Its subcellular location is the plastid. It localises to the chloroplast thylakoid membrane. Functionally, this b-type cytochrome is tightly associated with the reaction center of photosystem II (PSII). PSII is a light-driven water:plastoquinone oxidoreductase that uses light energy to abstract electrons from H(2)O, generating O(2) and a proton gradient subsequently used for ATP formation. It consists of a core antenna complex that captures photons, and an electron transfer chain that converts photonic excitation into a charge separation. In Ostreococcus tauri, this protein is Cytochrome b559 subunit alpha.